A 276-amino-acid chain; its full sequence is MGAMEDQLQRLGSVLDSLDARVKKLEQHPTLGGGSSTAQEIRMILIGPPGAGKGTQAPKIKEKFSCCHLATGDMLRSQVAKKTPLGREAKKIMDQGGLVSDDIVIGMIKEELDTNVECKGGFILDGFPRTVPQAQSLDAMLQARNQKLQHAVELQIDDALLVARITGRLVHPASGRSYHTTFNPPKKAMTDDVTGEPLIQRSDDNADALKKRLATYHSQTAPVVDYYRKTGIWKPIDASQEPGTVWKSLLNIFDGDAKKASSAGGGILDKLAASGR.

G50–T55 provides a ligand contact to ATP. Residues A70–V99 form an NMP region. AMP-binding positions include T71, R76, G97–V99, G126–R129, and Q133. An LID region spans residues G167 to D204. ATP contacts are provided by residues R168 and S177–Y178. R201 and R212 together coordinate AMP. Residue Q240 coordinates ATP.

This sequence belongs to the adenylate kinase family. AK2 subfamily. In terms of assembly, monomer.

The protein localises to the cytoplasm. It is found in the cytosol. It localises to the mitochondrion intermembrane space. It catalyses the reaction AMP + ATP = 2 ADP. Functionally, catalyzes the reversible transfer of the terminal phosphate group between ATP and AMP. Plays an important role in cellular energy homeostasis and in adenine nucleotide metabolism. Adenylate kinase activity is critical for regulation of the phosphate utilization and the AMP de novo biosynthesis pathways. This is Adenylate kinase from Pyricularia oryzae (strain 70-15 / ATCC MYA-4617 / FGSC 8958) (Rice blast fungus).